We begin with the raw amino-acid sequence, 314 residues long: Malate dehydrogenase (314 aa).

Residues 11-16 (GSGNIG) and D35 each bind NAD(+). R84 and R90 together coordinate substrate. Residues N97 and 120–122 (ITN) each bind NAD(+). Substrate-binding residues include N122 and R153. H177 functions as the Proton acceptor in the catalytic mechanism.

The protein belongs to the LDH/MDH superfamily. MDH type 3 family.

The catalysed reaction is (S)-malate + NAD(+) = oxaloacetate + NADH + H(+). Functionally, catalyzes the reversible oxidation of malate to oxaloacetate. This is Malate dehydrogenase from Rickettsia bellii (strain RML369-C).